The primary structure comprises 297 residues: Phosphatidylserine decarboxylase proenzyme (297 aa).

Residues aspartate 112, histidine 168, and serine 255 each act as charge relay system; for autoendoproteolytic cleavage activity in the active site. Serine 255 acts as the Schiff-base intermediate with substrate; via pyruvic acid; for decarboxylase activity in catalysis. At serine 255 the chain carries Pyruvic acid (Ser); by autocatalysis.

It belongs to the phosphatidylserine decarboxylase family. PSD-B subfamily. Prokaryotic type II sub-subfamily. As to quaternary structure, heterodimer of a large membrane-associated beta subunit and a small pyruvoyl-containing alpha subunit. It depends on pyruvate as a cofactor. In terms of processing, is synthesized initially as an inactive proenzyme. Formation of the active enzyme involves a self-maturation process in which the active site pyruvoyl group is generated from an internal serine residue via an autocatalytic post-translational modification. Two non-identical subunits are generated from the proenzyme in this reaction, and the pyruvate is formed at the N-terminus of the alpha chain, which is derived from the carboxyl end of the proenzyme. The autoendoproteolytic cleavage occurs by a canonical serine protease mechanism, in which the side chain hydroxyl group of the serine supplies its oxygen atom to form the C-terminus of the beta chain, while the remainder of the serine residue undergoes an oxidative deamination to produce ammonia and the pyruvoyl prosthetic group on the alpha chain. During this reaction, the Ser that is part of the protease active site of the proenzyme becomes the pyruvoyl prosthetic group, which constitutes an essential element of the active site of the mature decarboxylase.

The protein localises to the cell membrane. It carries out the reaction a 1,2-diacyl-sn-glycero-3-phospho-L-serine + H(+) = a 1,2-diacyl-sn-glycero-3-phosphoethanolamine + CO2. It functions in the pathway phospholipid metabolism; phosphatidylethanolamine biosynthesis; phosphatidylethanolamine from CDP-diacylglycerol: step 2/2. Catalyzes the formation of phosphatidylethanolamine (PtdEtn) from phosphatidylserine (PtdSer). This Clostridium tetani (strain Massachusetts / E88) protein is Phosphatidylserine decarboxylase proenzyme.